Reading from the N-terminus, the 716-residue chain is UvrABC system protein C (716 aa).

Residues alanine 14–isoleucine 94 enclose the GIY-YIG domain. A UVR domain is found at threonine 206 to serine 241.

Belongs to the UvrC family. As to quaternary structure, interacts with UvrB in an incision complex.

The protein resides in the cytoplasm. Its function is as follows. The UvrABC repair system catalyzes the recognition and processing of DNA lesions. UvrC both incises the 5' and 3' sides of the lesion. The N-terminal half is responsible for the 3' incision and the C-terminal half is responsible for the 5' incision. In Anaeromyxobacter sp. (strain Fw109-5), this protein is UvrABC system protein C.